We begin with the raw amino-acid sequence, 150 residues long: MEIQTKTLGTQTVEAHQIITLERGLYGFEKYHRFALFDAVQVPFIHMQSLDDPALSFIAIDPFLFRPDYELDIDDVLLQPLDISSPTDVLVFALVTIPPDGSAVTANLQGPLIVNKKNRKAMQVAMGGDRWRTKHDIVAEMAERRAQEQC.

Belongs to the FliW family. In terms of assembly, interacts with translational regulator CsrA. Interacts with flagellins FlaB1, FlaB2 and FlaB3.

It is found in the cytoplasm. Functionally, acts as an anti-CsrA protein, binds CsrA and prevents it from repressing translation of its target genes, one of which is flagellin. Binds to flagellin and participates in the assembly of the flagellum. In terms of biological role, binds to the C-terminal region of flagellin, which is implicated in polymerization, and participates in the assembly of the flagellum. The polypeptide is Flagellar assembly factor FliW (Treponema pallidum (strain Nichols)).